The primary structure comprises 74 residues: MNGPRYAHSNYGGNKGGPSNSTSGVFAGDIRCQVSNKSIMLISLKITNSPNSNSRGSSSSSSTSKSSSKTSFTQ.

2 disordered regions span residues 1–26 (MNGPRYAHSNYGGNKGGPSNSTSGVF) and 46–74 (ITNSPNSNSRGSSSSSSTSKSSSKTSFTQ). Residues 34 to 50 (VSNKSIMLISLKITNSP) form a helical membrane-spanning segment. Residues 47–74 (TNSPNSNSRGSSSSSSTSKSSSKTSFTQ) are compositionally biased toward low complexity.

It localises to the membrane. This is an uncharacterized protein from Dictyostelium discoideum (Social amoeba).